We begin with the raw amino-acid sequence, 373 residues long: Probable pectin lyase C (373 aa).

Residues 1–17 (MKKYLLSLLAAVTYTTA) form the signal peptide. 2 disulfide bridges follow: C78–C95 and C87–C215. N-linked (GlcNAc...) asparagine glycosylation is found at N140 and N229. R245 is an active-site residue. A disulfide bridge connects residues C315 and C323.

Belongs to the polysaccharide lyase 1 family.

The protein resides in the secreted. The catalysed reaction is Eliminative cleavage of (1-&gt;4)-alpha-D-galacturonan methyl ester to give oligosaccharides with 4-deoxy-6-O-methyl-alpha-D-galact-4-enuronosyl groups at their non-reducing ends.. Pectinolytic enzymes consist of four classes of enzymes: pectin lyase, polygalacturonase, pectin methylesterase and rhamnogalacturonase. Among pectinolytic enzymes, pectin lyase is the most important in depolymerization of pectin, since it cleaves internal glycosidic bonds of highly methylated pectins. The chain is Probable pectin lyase C (pelC) from Emericella nidulans (strain FGSC A4 / ATCC 38163 / CBS 112.46 / NRRL 194 / M139) (Aspergillus nidulans).